Consider the following 353-residue polypeptide: Abasic site processing protein HMCES (353 aa).

Cys2 serves as the catalytic Nucleophile. The residue at position 2 (Cys2) is a Thiazolidine linkage to a ring-opened DNA abasic site. The active site involves Glu127. Glycyl lysine isopeptide (Lys-Gly) (interchain with G-Cter in SUMO2) cross-links involve residues Lys148 and Lys151. A Phosphoserine modification is found at Ser160. Residues Lys274 and Lys275 each participate in a glycyl lysine isopeptide (Lys-Gly) (interchain with G-Cter in SUMO2) cross-link. The disordered stretch occupies residues 292 to 353; the sequence is TKSPKKEVPD…DEPVAKRPNS (62 aa). At Ser294 the chain carries Phosphoserine. The span at 295 to 307 shows a compositional bias: basic and acidic residues; sequence PKKEVPDSPKKDA. Residue Lys305 forms a Glycyl lysine isopeptide (Lys-Gly) (interchain with G-Cter in SUMO2) linkage. Ser321 is subject to Phosphoserine. The short motif at 332–338 is the PIP-box element; the sequence is SLLDRWL. A compositionally biased stretch (basic and acidic residues) spans 336–353; sequence RWLKQEKEDEPVAKRPNS. Residues Lys339 and Lys342 each participate in a glycyl lysine isopeptide (Lys-Gly) (interchain with G-Cter in SUMO2) cross-link.

Belongs to the SOS response-associated peptidase family. In terms of assembly, interacts (via PIP-box motif) with PCNA. Post-translationally, ubiquitinated; the covalent HMCES DNA-protein cross-link is ubiquitinated, leading to its degradation by the proteasome.

Its subcellular location is the chromosome. With respect to regulation, formation and reversal of DNA-protein cross-link depends on DNA context. Catalyzes formation of the thiazolidine linkage in presence of abasic sites in single-stranded DNA. Mediates the reversal of the thiazolidine cross-link in presence of double stranded DNA. Its function is as follows. Sensor of abasic sites in single-stranded DNA (ssDNA) required to preserve genome integrity by promoting error-free repair of abasic sites. Acts as an enzyme that recognizes and binds abasic sites in ssDNA at replication forks and chemically modifies the lesion by forming a covalent cross-link with DNA: forms a stable thiazolidine linkage between a ring-opened abasic site and the alpha-amino and sulfhydryl substituents of its N-terminal catalytic cysteine residue. Promotes error-free repair by protecting abasic sites from translesion synthesis (TLS) polymerases and endonucleases that are error-prone and would generate mutations and double-strand breaks. The HMCES DNA-protein cross-link is then either reversed or degraded. HMCES is able to catalyze the reversal of its thiazolidine cross-link and cycle between a cross-link and a non-cross-linked state depending on DNA context: mediates self-reversal of the thiazolidine cross-link in double stranded DNA, allowing APEX1 to initiate downstream repair of abasic sites. The HMCES DNA-protein cross-link can also be degraded by the SPRTN metalloprotease following unfolding by the BRIP1/FANCJ helicase. Has preference for ssDNA, but can also accommodate double-stranded DNA with 3' or 5' overhang (dsDNA), and dsDNA-ssDNA 3' junction. Plays a protective role during somatic hypermutation of immunoglobulin genes in B-cells: acts via its ability to form covalent cross-links with abasic sites, thereby limiting the accumulation of deletions in somatic hypermutation target regions. Also involved in class switch recombination (CSR) in B-cells independently of the formation of a DNA-protein cross-link: acts by binding and protecting ssDNA overhangs to promote DNA double-strand break repair through the microhomology-mediated alternative-end-joining (Alt-EJ) pathway. Acts as a protease: mediates autocatalytic processing of its N-terminal methionine in order to expose the catalytic cysteine. The protein is Abasic site processing protein HMCES of Rattus norvegicus (Rat).